The primary structure comprises 494 residues: UDP-N-acetylmuramoyl-L-alanyl-D-glutamate--2,6-diaminopimelate ligase (494 aa).

Residue serine 30 coordinates UDP-N-acetyl-alpha-D-muramoyl-L-alanyl-D-glutamate. ATP is bound at residue 110 to 116 (GTNGKTS). Residues 152–153 (TT), serine 179, and arginine 187 each bind UDP-N-acetyl-alpha-D-muramoyl-L-alanyl-D-glutamate. Lysine 219 carries the post-translational modification N6-carboxylysine. Meso-2,6-diaminopimelate is bound by residues arginine 380, 404–407 (DNPR), glycine 456, and glutamate 460. Positions 404–407 (DNPR) match the Meso-diaminopimelate recognition motif motif.

It belongs to the MurCDEF family. MurE subfamily. Mg(2+) is required as a cofactor. In terms of processing, carboxylation is probably crucial for Mg(2+) binding and, consequently, for the gamma-phosphate positioning of ATP.

The protein resides in the cytoplasm. The enzyme catalyses UDP-N-acetyl-alpha-D-muramoyl-L-alanyl-D-glutamate + meso-2,6-diaminopimelate + ATP = UDP-N-acetyl-alpha-D-muramoyl-L-alanyl-gamma-D-glutamyl-meso-2,6-diaminopimelate + ADP + phosphate + H(+). The protein operates within cell wall biogenesis; peptidoglycan biosynthesis. In terms of biological role, catalyzes the addition of meso-diaminopimelic acid to the nucleotide precursor UDP-N-acetylmuramoyl-L-alanyl-D-glutamate (UMAG) in the biosynthesis of bacterial cell-wall peptidoglycan. This is UDP-N-acetylmuramoyl-L-alanyl-D-glutamate--2,6-diaminopimelate ligase from Alkaliphilus metalliredigens (strain QYMF).